The chain runs to 72 residues: MSNSMINPSIVNLLEKVDDRYSLVTITSKRSRQLIDGAKSLVDIDSTKPVTVAINEIHEGKITYKTVKEGIK.

Belongs to the RNA polymerase subunit omega family. The RNAP catalytic core consists of 2 alpha, 1 beta, 1 beta' and 1 omega subunit. When a sigma factor is associated with the core the holoenzyme is formed, which can initiate transcription.

The catalysed reaction is RNA(n) + a ribonucleoside 5'-triphosphate = RNA(n+1) + diphosphate. Its function is as follows. Promotes RNA polymerase assembly. Latches the N- and C-terminal regions of the beta' subunit thereby facilitating its interaction with the beta and alpha subunits. The protein is DNA-directed RNA polymerase subunit omega of Clostridium botulinum (strain Loch Maree / Type A3).